The following is a 130-amino-acid chain: Histone H2A type 2-B (130 aa).

The interval 1–22 is disordered; the sequence is MSGRGKQGGKARAKAKSRSSRA. Residue Ser2 is modified to N-acetylserine. Residue Ser2 is modified to Phosphoserine; by RPS6KA5. Position 4 is a citrulline; alternate (Arg4). Symmetric dimethylarginine; by PRMT5; alternate is present on Arg4. Residues Lys6 and Lys10 each carry the N6-(2-hydroxyisobutyryl)lysine; alternate modification. N6-(beta-hydroxybutyryl)lysine; alternate is present on Lys6. The segment covering 7 to 19 has biased composition (basic residues); sequence QGGKARAKAKSRS. Residue Lys10 is modified to N6-lactoyllysine; alternate. Lys10 bears the N6-succinyllysine; alternate mark. Glycyl lysine isopeptide (Lys-Gly) (interchain with G-Cter in ubiquitin) cross-links involve residues Lys14 and Lys16. At Lys37 the chain carries N6-(2-hydroxyisobutyryl)lysine; alternate. Lys37 carries the post-translational modification N6-(beta-hydroxybutyryl)lysine; alternate. Lys37 carries the N6-crotonyllysine; alternate modification. N6-(2-hydroxyisobutyryl)lysine occurs at positions 75 and 76. The residue at position 96 (Lys96) is an N6-(2-hydroxyisobutyryl)lysine; alternate. Position 96 is an N6-succinyllysine; alternate (Lys96). Lys96 is modified (N6-glutaryllysine; alternate). N5-methylglutamine is present on Gln105. Lys119 is modified (N6-(2-hydroxyisobutyryl)lysine; alternate). Lys119 and Lys120 each carry N6-crotonyllysine; alternate. An N6-glutaryllysine; alternate mark is found at Lys119 and Lys120. Lys120 bears the N6-(beta-hydroxybutyryl)lysine; alternate mark. Lys120 is covalently cross-linked (Glycyl lysine isopeptide (Lys-Gly) (interchain with G-Cter in ubiquitin); alternate). Residue Thr121 is modified to Phosphothreonine; by DCAF1.

It belongs to the histone H2A family. As to quaternary structure, the nucleosome is a histone octamer containing two molecules each of H2A, H2B, H3 and H4 assembled in one H3-H4 heterotetramer and two H2A-H2B heterodimers. The octamer wraps approximately 147 bp of DNA. Post-translationally, deiminated on Arg-4 in granulocytes upon calcium entry. In terms of processing, monoubiquitination of Lys-120 (H2AK119Ub) by RING1, TRIM37 and RNF2/RING2 complex gives a specific tag for epigenetic transcriptional repression and participates in X chromosome inactivation of female mammals. It is involved in the initiation of both imprinted and random X inactivation. Ubiquitinated H2A is enriched in inactive X chromosome chromatin. Ubiquitination of H2A functions downstream of methylation of 'Lys-27' of histone H3 (H3K27me). H2AK119Ub by RNF2/RING2 can also be induced by ultraviolet and may be involved in DNA repair. Following DNA double-strand breaks (DSBs), it is ubiquitinated through 'Lys-63' linkage of ubiquitin moieties by the E2 ligase UBE2N and the E3 ligases RNF8 and RNF168, leading to the recruitment of repair proteins to sites of DNA damage. Ubiquitination at Lys-14 and Lys-16 (H2AK13Ub and H2AK15Ub, respectively) in response to DNA damage is initiated by RNF168 that mediates monoubiquitination at these 2 sites, and 'Lys-63'-linked ubiquitin are then conjugated to monoubiquitin; RNF8 is able to extend 'Lys-63'-linked ubiquitin chains in vitro. Deubiquitinated by USP51 at Lys-14 and Lys-16 (H2AK13Ub and H2AK15Ub, respectively) after damaged DNA is repaired. H2AK119Ub and ionizing radiation-induced 'Lys-63'-linked ubiquitination (H2AK13Ub and H2AK15Ub) are distinct events. Phosphorylation on Ser-2 (H2AS1ph) is enhanced during mitosis. Phosphorylation on Ser-2 by RPS6KA5/MSK1 directly represses transcription. Acetylation of H3 inhibits Ser-2 phosphorylation by RPS6KA5/MSK1. Phosphorylation at Thr-121 (H2AT120ph) by DCAF1 is present in the regulatory region of many tumor suppresor genes and down-regulates their transcription. Post-translationally, symmetric dimethylation on Arg-4 by the PRDM1/PRMT5 complex may play a crucial role in the germ-cell lineage. In terms of processing, glutamine methylation at Gln-105 (H2AQ104me) by FBL is specifically dedicated to polymerase I. It is present at 35S ribosomal DNA locus and impairs binding of the FACT complex. Crotonylation (Kcr) is specifically present in male germ cells and marks testis-specific genes in post-meiotic cells, including X-linked genes that escape sex chromosome inactivation in haploid cells. Crotonylation marks active promoters and enhancers and confers resistance to transcriptional repressors. It is also associated with post-meiotically activated genes on autosomes. Post-translationally, hydroxybutyrylation of histones is induced by starvation. In terms of processing, lactylated in macrophages by EP300/P300 by using lactoyl-CoA directly derived from endogenous or exogenous lactate, leading to stimulates gene transcription.

It is found in the nucleus. Its subcellular location is the chromosome. Core component of nucleosome. Nucleosomes wrap and compact DNA into chromatin, limiting DNA accessibility to the cellular machineries which require DNA as a template. Histones thereby play a central role in transcription regulation, DNA repair, DNA replication and chromosomal stability. DNA accessibility is regulated via a complex set of post-translational modifications of histones, also called histone code, and nucleosome remodeling. The chain is Histone H2A type 2-B from Mus musculus (Mouse).